Here is a 301-residue protein sequence, read N- to C-terminus: GTP cyclohydrolase FolE2 (301 aa).

The protein belongs to the GTP cyclohydrolase IV family.

It catalyses the reaction GTP + H2O = 7,8-dihydroneopterin 3'-triphosphate + formate + H(+). It participates in cofactor biosynthesis; 7,8-dihydroneopterin triphosphate biosynthesis; 7,8-dihydroneopterin triphosphate from GTP: step 1/1. Converts GTP to 7,8-dihydroneopterin triphosphate. The chain is GTP cyclohydrolase FolE2 from Pseudomonas putida (strain GB-1).